The chain runs to 95 residues: Small ribosomal subunit protein bS16 (95 aa).

The protein belongs to the bacterial ribosomal protein bS16 family.

This is Small ribosomal subunit protein bS16 from Thermotoga neapolitana (strain ATCC 49049 / DSM 4359 / NBRC 107923 / NS-E).